The sequence spans 501 residues: Dynein regulatory complex subunit 5 (501 aa).

Over residues 1 to 23 (MQETVTTSALLDPSHSSVSTQDK) the composition is skewed to polar residues. Disordered stretches follow at residues 1–56 (MQET…HPGA) and 203–222 (PAQL…EMEE). The span at 24 to 34 (SSTGGHTSSTG) shows a compositional bias: low complexity. Residues 35 to 49 (PQPSKPSITPVSAKS) show a composition bias toward polar residues. LRR repeat units follow at residues 308–321 (VLEE…LIGD), 335–355 (RLRV…QSLA), 363–383 (NLIS…QALA), 391–411 (CLTT…TLLS), and 419–439 (TLTS…KQLL).

The protein belongs to the DRC5 family. As to quaternary structure, component of the nexin-dynein regulatory complex (N-DRC). Interacts with DRC1. Interacts with FBXL13/DRC6, DRC3 and DRC7.

It localises to the cell projection. The protein resides in the cilium. It is found in the flagellum. Its subcellular location is the cytoplasm. The protein localises to the cytoskeleton. It localises to the flagellum axoneme. Functionally, component of the nexin-dynein regulatory complex (N-DRC) a key regulator of ciliary/flagellar motility which maintains the alignment and integrity of the distal axoneme and regulates microtubule sliding in motile axonemes. May play a role in the assembly of N-DRC. May be required for sperm motility. The sequence is that of Dynein regulatory complex subunit 5 (TCTE1) from Macaca fascicularis (Crab-eating macaque).